The primary structure comprises 453 residues: Growth/differentiation factor 9 (453 aa).

Residues 1 to 25 (MALPNKFFLWFCCFAWLCFPISLDS) form the signal peptide. The propeptide occupies 26–318 (QPSRGEAQIV…EGVRLSRHRR (293 aa)). 5 N-linked (GlcNAc...) asparagine glycosylation sites follow: asparagine 106, asparagine 163, asparagine 236, asparagine 255, and asparagine 269. The disordered stretch occupies residues 281 to 300 (SLHPKRKPSQDPDQKRGLSA). The N-linked (GlcNAc...) asparagine glycan is linked to asparagine 337. Cystine bridges form between cysteine 352–cysteine 418, cysteine 381–cysteine 450, and cysteine 385–cysteine 452.

Belongs to the TGF-beta family. Homodimer or heterodimer (Potential). But, in contrast to other members of this family, cannot be disulfide-linked. Phosphorylated; phosphorylation is critical for GDF9 function.

The protein resides in the secreted. Its function is as follows. Required for ovarian folliculogenesis. The polypeptide is Growth/differentiation factor 9 (GDF9) (Bos taurus (Bovine)).